The primary structure comprises 148 residues: Deoxyuridine 5'-triphosphate nucleotidohydrolase (148 aa).

Substrate-binding positions include 67-69, asparagine 80, 84-86, and methionine 94; these read RSG and LID.

Belongs to the dUTPase family. It depends on Mg(2+) as a cofactor.

The catalysed reaction is dUTP + H2O = dUMP + diphosphate + H(+). It functions in the pathway pyrimidine metabolism; dUMP biosynthesis; dUMP from dCTP (dUTP route): step 2/2. Functionally, this enzyme is involved in nucleotide metabolism: it produces dUMP, the immediate precursor of thymidine nucleotides and it decreases the intracellular concentration of dUTP so that uracil cannot be incorporated into DNA. This Burkholderia cenocepacia (strain ATCC BAA-245 / DSM 16553 / LMG 16656 / NCTC 13227 / J2315 / CF5610) (Burkholderia cepacia (strain J2315)) protein is Deoxyuridine 5'-triphosphate nucleotidohydrolase.